Consider the following 714-residue polypeptide: 2'-5'-oligoadenylate synthase 2 (714 aa).

Gly-2 carries N-myristoyl glycine lipidation. OAS domain stretches follow at residues 11-336 (KPSE…SWNV) and 344-683 (TPGH…WNVP). Residue Ser-397 coordinates ATP. Positions 409 and 480 each coordinate Mg(2+). ATP is bound by residues Arg-544 and Lys-547.

This sequence belongs to the 2-5A synthase family. In terms of assembly, homodimer. The cofactor is Mg(2+). Post-translationally, myristoylation is not essential for its activity. Glycosylated. Glycosylation is essential for its activity.

The protein resides in the cytoplasm. The protein localises to the perinuclear region. It catalyses the reaction 3 ATP = 5'-triphosphoadenylyl-(2'-&gt;5')-adenylyl-(2'-&gt;5')-adenosine + 2 diphosphate. Produced as a latent enzyme which is activated by double stranded RNA (dsRNA) generated during the course of viral infection. The dsRNA activator must be at least 15 nucleotides long, and no modification of the 2'-hydroxyl group is tolerated. ssRNA or dsDNA do not act as activators. Strongly inhibited by copper, iron and zinc ions. Partially inhibited by cobalt and nickel ions. Functionally, interferon-induced, dsRNA-activated antiviral enzyme which plays a critical role in cellular innate antiviral response. Activated by detection of double stranded RNA (dsRNA): polymerizes higher oligomers of 2'-5'-oligoadenylates (2-5A) from ATP which then bind to the inactive monomeric form of ribonuclease L (RNASEL) leading to its dimerization and subsequent activation. Activation of RNASEL leads to degradation of cellular as well as viral RNA, resulting in the inhibition of protein synthesis, thus terminating viral replication. Can mediate the antiviral effect via the classical RNASEL-dependent pathway or an alternative antiviral pathway independent of RNASEL. In addition, it may also play a role in other cellular processes such as apoptosis, cell growth, differentiation and gene regulation. May act as a negative regulator of lactation, stopping lactation in virally infected mammary gland lobules, thereby preventing transmission of viruses to neonates. Non-infected lobules would not be affected, allowing efficient pup feeding during infection. The protein is 2'-5'-oligoadenylate synthase 2 (OAS2) of Bos taurus (Bovine).